Here is a 119-residue protein sequence, read N- to C-terminus: Beta-2-microglobulin (119 aa).

An N-terminal signal peptide occupies residues 1-20 (MARFVAVALLVLLSLSGLEA). Residues 25–114 (PKIQVYSRHP…VTFSTPKTVK (90 aa)) enclose the Ig-like C1-type domain. A disulfide bond links C45 and C100.

This sequence belongs to the beta-2-microglobulin family. Heterodimer of an alpha chain and a beta chain. Beta-2-microglobulin is the beta-chain of major histocompatibility complex class I molecules.

Its subcellular location is the secreted. Its function is as follows. Component of the class I major histocompatibility complex (MHC). Involved in the presentation of peptide antigens to the immune system. The polypeptide is Beta-2-microglobulin (B2M) (Plecturocebus moloch (Dusky titi monkey)).